Reading from the N-terminus, the 226-residue chain is Peroxiredoxin-like 2C (226 aa).

Belongs to the peroxiredoxin-like PRXL2 family. PRXL2C subfamily. Expressed in gastric tissues.

In terms of biological role, may positively regulate ERK1/2 signaling and AKT1 activation leading to HIF1A up-regulation with an increased expression of glycolysis genes and enhanced glycolysis. This is Peroxiredoxin-like 2C from Homo sapiens (Human).